We begin with the raw amino-acid sequence, 770 residues long: MELDINRTLLVLLGQVYTYIFQVELLRRCDPRVACRFLYRLAANCLTVRYLLKLFLRGFNTQLKFGNTPTVCALHWALCYVKGEGERLFELLQHFKTRFVYGETKDSNCIKDYFVSAFNLKTCQYHHELSLTTYGGYVSSEIQFLHDIENFLKQLNYCYIITSSREALNTLETVTRFMTDTIGSGLIPPVELFDPAHPCAICFEELCITANQGETLHRRLLGCICDHVTKQVRVNVDVDDIIRCLPYIPDVPDIKRQSAVEALRTLQTKTVVNPMGAKNDTFDQTYEIASTMLDSYNVFKPAPRCMYAISELKFWLTSNSTEGPQRTLDVFVDNLDVLNEHEKHAELTAVTVELALFGKTPIHFDRAFSEELGSLDAIDSILVGNRSSSPDSQIEALIKACYAHHLSSPLMRHISNPSHDNEAALRQLLERVGCEDDLTKEASDSATASECDLNDDSSITFAVHGWENLLSKAKIDAAERKRVYLEHLSKRSLTSLGRCIREQRQELEKTLRVNVYGEALLQTFVSMQNGFGARNVFLAKVSQAGCIIDNRIQEAAFDAHRFIRNTLVRHTVDAAMLPALTHKFFELVNGPLFNHDEHRFAQPPNTALFFTVENVGLFPHLKEELAKFMGGVVGSNWLLSPFRGFYCFSGVEGVTFAQRLAWKYIRELVFATTLFTSVFHCGEVRLCRVDRLGKDPRGCTSQPKGIGSSHGPLDGIYLTYEETCPLVAIIQSGETGIDQNTVVIYDSDVFSLLYTLMQRLAPDSTDPAFS.

The C3H1-type zinc finger occupies C199–H227. Residue F675–G682 coordinates ATP.

This sequence belongs to the herpesviridae TRM1 protein family. In terms of assembly, associates with TRM2 and TRM3 to form the tripartite terminase complex. Interacts with portal protein.

Its subcellular location is the host nucleus. Component of the molecular motor that translocates viral genomic DNA in empty capsid during DNA packaging. Forms a tripartite terminase complex together with TRM2 and TRM3 in the host cytoplasm. Once the complex reaches the host nucleus, it interacts with the capsid portal vertex. This portal forms a ring in which genomic DNA is translocated into the capsid. TRM1 carries an endonuclease activity that plays an important role for the cleavage of concatemeric viral DNA into unit length genomes. The sequence is that of Tripartite terminase subunit 1 from Varicella-zoster virus (strain Dumas) (HHV-3).